The chain runs to 471 residues: Heat shock 70 kDa protein 13 (471 aa).

An N-terminal signal peptide occupies residues 1–22 (MAGEMTILGSAVLTLLLAGYLA). Positions 317 to 330 (DSKEPQNGDSELPK) are enriched in basic and acidic residues. Residues 317–350 (DSKEPQNGDSELPKDQLTPGDGHHVNRVFRPGLS) form a disordered region.

It belongs to the heat shock protein 70 family. In terms of assembly, binds UBQLN2.

It is found in the microsome. The protein localises to the endoplasmic reticulum. Its function is as follows. Has peptide-independent ATPase activity. In Mus musculus (Mouse), this protein is Heat shock 70 kDa protein 13 (Hspa13).